Here is a 465-residue protein sequence, read N- to C-terminus: MAKKAPDVGDYKYGFHDDDVSIFRSERGLTENIVREISNMKNEPEWMLDFRLKSLKLFYKMPMPQWGGDLSELNFDDITYYVKPSEQAERSWDEVPEEIKRTFDKLGIPEAEQKYLAGVSAQYESEVVYHNMEKELEEKGIIFKDTDSALQENEELFKKYFASVVPAADNKFAALNSAVWSGGSFIYVPKNIKLDTPLQAYFRINSENMGQFERTLIIADEGASVHYVEGCTAPVYTTSSLHSAVVEIIVHKDAHVRYTTIQNWANNVYNLVTKRTFVYENGNMEWVDGNLGSKLTMKYPNCVLLGEGAKGSTLSIAFAGKGQVQDAGAKMIHKAPNTSSTIVSKSISKNGGKVIYRGIVHFGRKAKGARSNIECDTLILDNESTSDTIPYNEVFNDQISLEHEAKVSKVSEEQLFYLMSRGISEEEATEMIVMGFIEPFTKELPMEYAVEMNRLIKFEMEGSIG.

It belongs to the iron-sulfur cluster assembly SufBD family.

In Staphylococcus aureus (strain USA300), this protein is Iron-sulfur cluster assembly SufBD family protein SAUSA300_0822.